A 79-amino-acid polypeptide reads, in one-letter code: Acyl carrier protein (79 aa).

Residues 2 to 77 enclose the Carrier domain; sequence DNIEQRVKKI…QAIDYATAHV (76 aa). O-(pantetheine 4'-phosphoryl)serine is present on serine 37.

It belongs to the acyl carrier protein (ACP) family. In terms of processing, 4'-phosphopantetheine is transferred from CoA to a specific serine of apo-ACP by AcpS. This modification is essential for activity because fatty acids are bound in thioester linkage to the sulfhydryl of the prosthetic group.

The protein resides in the cytoplasm. Its pathway is lipid metabolism; fatty acid biosynthesis. Functionally, carrier of the growing fatty acid chain in fatty acid biosynthesis. The sequence is that of Acyl carrier protein from Cupriavidus pinatubonensis (strain JMP 134 / LMG 1197) (Cupriavidus necator (strain JMP 134)).